A 170-amino-acid chain; its full sequence is Acireductone dioxygenase (170 aa).

4 residues coordinate Fe(2+): His-99, His-101, Glu-105, and His-144. Residues His-99, His-101, Glu-105, and His-144 each coordinate Ni(2+).

Belongs to the acireductone dioxygenase (ARD) family. As to quaternary structure, monomer. Requires Fe(2+) as cofactor. Ni(2+) is required as a cofactor.

The enzyme catalyses 1,2-dihydroxy-5-(methylsulfanyl)pent-1-en-3-one + O2 = 3-(methylsulfanyl)propanoate + CO + formate + 2 H(+). The catalysed reaction is 1,2-dihydroxy-5-(methylsulfanyl)pent-1-en-3-one + O2 = 4-methylsulfanyl-2-oxobutanoate + formate + 2 H(+). Its pathway is amino-acid biosynthesis; L-methionine biosynthesis via salvage pathway; L-methionine from S-methyl-5-thio-alpha-D-ribose 1-phosphate: step 5/6. Its function is as follows. Catalyzes 2 different reactions between oxygen and the acireductone 1,2-dihydroxy-3-keto-5-methylthiopentene (DHK-MTPene) depending upon the metal bound in the active site. Fe-containing acireductone dioxygenase (Fe-ARD) produces formate and 2-keto-4-methylthiobutyrate (KMTB), the alpha-ketoacid precursor of methionine in the methionine recycle pathway. Ni-containing acireductone dioxygenase (Ni-ARD) produces methylthiopropionate, carbon monoxide and formate, and does not lie on the methionine recycle pathway. The polypeptide is Acireductone dioxygenase (Bacillus cereus (strain ATCC 10987 / NRS 248)).